The following is a 221-amino-acid chain: Chalcone--flavanone isomerase (221 aa).

Thr-50, Asn-115, and Thr-192 together coordinate substrate.

Belongs to the chalcone isomerase family.

It carries out the reaction a chalcone = a flavanone.. The protein operates within secondary metabolite biosynthesis; flavonoid biosynthesis. Catalyzes the intramolecular cyclization of bicyclic chalcones into tricyclic (S)-flavanones. Responsible for the isomerization of 4,2',4',6'-tetrahydroxychalcone (also termed chalcone) into naringenin. In Phaseolus vulgaris (Kidney bean), this protein is Chalcone--flavanone isomerase (CHI).